The following is a 129-amino-acid chain: Lysozyme C (129 aa).

A C-type lysozyme domain is found at 1 to 129; it reads KVYGRCELAA…VNAWIRGCRL (129 aa). 4 disulfides stabilise this stretch: Cys-6/Cys-127, Cys-30/Cys-115, Cys-64/Cys-80, and Cys-76/Cys-94. Residues Glu-35 and Asp-52 contribute to the active site.

It belongs to the glycosyl hydrolase 22 family. In terms of assembly, monomer.

The protein localises to the secreted. It carries out the reaction Hydrolysis of (1-&gt;4)-beta-linkages between N-acetylmuramic acid and N-acetyl-D-glucosamine residues in a peptidoglycan and between N-acetyl-D-glucosamine residues in chitodextrins.. In terms of biological role, lysozymes have primarily a bacteriolytic function; those in tissues and body fluids are associated with the monocyte-macrophage system and enhance the activity of immunoagents. The chain is Lysozyme C (LYZ) from Syrmaticus reevesii (Reeves's pheasant).